A 341-amino-acid polypeptide reads, in one-letter code: L-threonine 3-dehydrogenase (341 aa).

Cys-38 provides a ligand contact to Zn(2+). Catalysis depends on charge relay system residues Thr-40 and His-43. 6 residues coordinate Zn(2+): His-63, Glu-64, Cys-93, Cys-96, Cys-99, and Cys-107. Residues Ile-175, Asp-195, Arg-200, 262–264, and 286–287 contribute to the NAD(+) site; these read LGI and IY.

Belongs to the zinc-containing alcohol dehydrogenase family. In terms of assembly, homotetramer. Zn(2+) serves as cofactor.

The protein localises to the cytoplasm. It catalyses the reaction L-threonine + NAD(+) = (2S)-2-amino-3-oxobutanoate + NADH + H(+). Its pathway is amino-acid degradation; L-threonine degradation via oxydo-reductase pathway; glycine from L-threonine: step 1/2. Catalyzes the NAD(+)-dependent oxidation of L-threonine to 2-amino-3-ketobutyrate. The polypeptide is L-threonine 3-dehydrogenase (Shewanella frigidimarina (strain NCIMB 400)).